A 143-amino-acid chain; its full sequence is MSDVEEVVEVQEETVVEQTAEVTIEDALKVVLRTALVHDGLARGLRESTKALTRGEALLVVLVSSVTEANIIKLVEGLANDPENKVPLIKVADAKQLGEWAGLGKIDREGNARKVVGASVVVVKNWGAETDELSMIMEHFSQQ.

Glycyl lysine isopeptide (Lys-Gly) (interchain with G-Cter in ubiquitin) cross-links involve residues lysine 85, lysine 95, and lysine 114.

This sequence belongs to the eukaryotic ribosomal protein eS12 family. As to quaternary structure, component of the small ribosomal subunit (SSU). Mature yeast ribosomes consist of a small (40S) and a large (60S) subunit. The 40S small subunit contains 1 molecule of ribosomal RNA (18S rRNA) and 33 different proteins (encoded by 57 genes). The large 60S subunit contains 3 rRNA molecules (25S, 5.8S and 5S rRNA) and 46 different proteins (encoded by 81 genes).

The protein localises to the cytoplasm. Component of the ribosome, a large ribonucleoprotein complex responsible for the synthesis of proteins in the cell. The small ribosomal subunit (SSU) binds messenger RNAs (mRNAs) and translates the encoded message by selecting cognate aminoacyl-transfer RNA (tRNA) molecules. The large subunit (LSU) contains the ribosomal catalytic site termed the peptidyl transferase center (PTC), which catalyzes the formation of peptide bonds, thereby polymerizing the amino acids delivered by tRNAs into a polypeptide chain. The nascent polypeptides leave the ribosome through a tunnel in the LSU and interact with protein factors that function in enzymatic processing, targeting, and the membrane insertion of nascent chains at the exit of the ribosomal tunnel. The protein is Small ribosomal subunit protein eS12 of Saccharomyces cerevisiae (strain ATCC 204508 / S288c) (Baker's yeast).